The primary structure comprises 437 residues: Methionine aminopeptidase 2 (437 aa).

The interval 1–90 (MAAQAAPAEE…LFPNNQYPKG (90 aa)) is disordered. A compositionally biased stretch (basic and acidic residues) spans 10–20 (ELSKLSVDETK). Acidic residues predominate over residues 31-42 (SDAESGDEEAEE). Residues 52–66 (AKKKKKRKPKKKKKA) are compositionally biased toward basic residues. His190 is a binding site for substrate. A divalent metal cation is bound by residues Asp210, Asp221, and His290. Residue His298 participates in substrate binding. Positions 323 and 418 each coordinate a divalent metal cation.

The protein belongs to the peptidase M24A family. Methionine aminopeptidase eukaryotic type 2 subfamily. Co(2+) serves as cofactor. It depends on Zn(2+) as a cofactor. Requires Mn(2+) as cofactor. Fe(2+) is required as a cofactor.

The protein localises to the cytoplasm. The catalysed reaction is Release of N-terminal amino acids, preferentially methionine, from peptides and arylamides.. In terms of biological role, cotranslationally removes the N-terminal methionine from nascent proteins. The N-terminal methionine is often cleaved when the second residue in the primary sequence is small and uncharged (Met-Ala-, Cys, Gly, Pro, Ser, Thr, or Val). This chain is Methionine aminopeptidase 2, found in Neurospora crassa (strain ATCC 24698 / 74-OR23-1A / CBS 708.71 / DSM 1257 / FGSC 987).